The chain runs to 772 residues: Larval serum protein 1 gamma chain (772 aa).

Positions 1 to 16 (MKLTLVILALVACVTA) are cleaved as a signal peptide. N-linked (GlcNAc...) asparagine glycosylation occurs at Asn242.

The protein belongs to the hemocyanin family. Heterohexamer, composed of three subunits, alpha, beta and gamma. As to expression, larval hemolymph.

Its subcellular location is the secreted. It is found in the extracellular space. In terms of biological role, larval storage protein (LSP) which may serve as a store of amino acids for synthesis of adult proteins. This chain is Larval serum protein 1 gamma chain (Lsp1gamma), found in Drosophila melanogaster (Fruit fly).